The following is a 257-amino-acid chain: Hydroxyacylglutathione hydrolase (257 aa).

Positions 54, 56, 58, 59, 113, 137, and 175 each coordinate Zn(2+).

The protein belongs to the metallo-beta-lactamase superfamily. Glyoxalase II family. In terms of assembly, monomer. Zn(2+) is required as a cofactor.

It carries out the reaction an S-(2-hydroxyacyl)glutathione + H2O = a 2-hydroxy carboxylate + glutathione + H(+). The protein operates within secondary metabolite metabolism; methylglyoxal degradation; (R)-lactate from methylglyoxal: step 2/2. In terms of biological role, thiolesterase that catalyzes the hydrolysis of S-D-lactoyl-glutathione to form glutathione and D-lactic acid. This Microcystis aeruginosa (strain NIES-843 / IAM M-2473) protein is Hydroxyacylglutathione hydrolase.